Here is a 401-residue protein sequence, read N- to C-terminus: Imidazolonepropionase (401 aa).

2 residues coordinate Fe(3+): H70 and H72. Residues H70 and H72 each contribute to the Zn(2+) site. 4-imidazolone-5-propanoate-binding residues include R79, Y142, and H175. Position 142 (Y142) interacts with N-formimidoyl-L-glutamate. H238 provides a ligand contact to Fe(3+). H238 contributes to the Zn(2+) binding site. Q241 serves as a coordination point for 4-imidazolone-5-propanoate. D313 provides a ligand contact to Fe(3+). Residue D313 coordinates Zn(2+). N-formimidoyl-L-glutamate-binding residues include N315 and G317. A 4-imidazolone-5-propanoate-binding site is contributed by T318.

It belongs to the metallo-dependent hydrolases superfamily. HutI family. Requires Zn(2+) as cofactor. Fe(3+) is required as a cofactor.

It is found in the cytoplasm. The catalysed reaction is 4-imidazolone-5-propanoate + H2O = N-formimidoyl-L-glutamate. Its pathway is amino-acid degradation; L-histidine degradation into L-glutamate; N-formimidoyl-L-glutamate from L-histidine: step 3/3. Its function is as follows. Catalyzes the hydrolytic cleavage of the carbon-nitrogen bond in imidazolone-5-propanoate to yield N-formimidoyl-L-glutamate. It is the third step in the universal histidine degradation pathway. The polypeptide is Imidazolonepropionase (Xanthomonas euvesicatoria pv. vesicatoria (strain 85-10) (Xanthomonas campestris pv. vesicatoria)).